The primary structure comprises 171 residues: CDP-archaeol synthase (171 aa).

5 consecutive transmembrane segments (helical) span residues 7-27, 54-74, 84-104, 115-135, and 141-161; these read IFWAFWYILPAYFANASPVLV, GFIGGVLIGTLVGIVQYFITP, VKLAFLLSFGALIGDLVGSFI, PAIGLDQLGFLISALAFAYPV, and GQIIFLLVVSPFIHWGANYFA.

It belongs to the CDP-archaeol synthase family. Mg(2+) is required as a cofactor.

The protein localises to the cell membrane. The enzyme catalyses 2,3-bis-O-(geranylgeranyl)-sn-glycerol 1-phosphate + CTP + H(+) = CDP-2,3-bis-O-(geranylgeranyl)-sn-glycerol + diphosphate. It participates in membrane lipid metabolism; glycerophospholipid metabolism. Functionally, catalyzes the formation of CDP-2,3-bis-(O-geranylgeranyl)-sn-glycerol (CDP-archaeol) from 2,3-bis-(O-geranylgeranyl)-sn-glycerol 1-phosphate (DGGGP) and CTP. This reaction is the third ether-bond-formation step in the biosynthesis of archaeal membrane lipids. The chain is CDP-archaeol synthase from Thermococcus kodakarensis (strain ATCC BAA-918 / JCM 12380 / KOD1) (Pyrococcus kodakaraensis (strain KOD1)).